A 704-amino-acid polypeptide reads, in one-letter code: Elongation factor G (704 aa).

In terms of domain architecture, tr-type G spans 8–290 (EKYRNIGICA…GVVRYLPAPN (283 aa)). Residues 17–24 (AHVDAGKT), 88–92 (DTPGH), and 142–145 (NKMD) contribute to the GTP site.

The protein belongs to the TRAFAC class translation factor GTPase superfamily. Classic translation factor GTPase family. EF-G/EF-2 subfamily.

The protein resides in the cytoplasm. Functionally, catalyzes the GTP-dependent ribosomal translocation step during translation elongation. During this step, the ribosome changes from the pre-translocational (PRE) to the post-translocational (POST) state as the newly formed A-site-bound peptidyl-tRNA and P-site-bound deacylated tRNA move to the P and E sites, respectively. Catalyzes the coordinated movement of the two tRNA molecules, the mRNA and conformational changes in the ribosome. The chain is Elongation factor G from Francisella tularensis subsp. mediasiatica (strain FSC147).